Consider the following 414-residue polypeptide: Putative competence-damage inducible protein (414 aa).

Belongs to the CinA family.

The chain is Putative competence-damage inducible protein from Listeria monocytogenes serovar 1/2a (strain ATCC BAA-679 / EGD-e).